A 352-amino-acid polypeptide reads, in one-letter code: Secretion system apparatus protein SsaU (352 aa).

4 helical membrane passes run 34–54 (LIAL…ILIE), 89–109 (LGAG…GVVI), 144–164 (LKVI…ASTF), and 176–196 (VLVV…FYIV).

It belongs to the type III secretion exporter family.

Its subcellular location is the cell membrane. In terms of biological role, part of a type III secretion system. This Salmonella typhimurium (strain LT2 / SGSC1412 / ATCC 700720) protein is Secretion system apparatus protein SsaU (ssaU).